Here is a 99-residue protein sequence, read N- to C-terminus: ATP synthase subunit c (99 aa).

Transmembrane regions (helical) follow at residues Gly23 to Leu43 and Met78 to Val98.

It belongs to the ATPase C chain family. In terms of assembly, F-type ATPases have 2 components, F(1) - the catalytic core - and F(0) - the membrane proton channel. F(1) has five subunits: alpha(3), beta(3), gamma(1), delta(1), epsilon(1). F(0) has three main subunits: a(1), b(2) and c(10-14). The alpha and beta chains form an alternating ring which encloses part of the gamma chain. F(1) is attached to F(0) by a central stalk formed by the gamma and epsilon chains, while a peripheral stalk is formed by the delta and b chains.

Its subcellular location is the cell membrane. Functionally, f(1)F(0) ATP synthase produces ATP from ADP in the presence of a proton or sodium gradient. F-type ATPases consist of two structural domains, F(1) containing the extramembraneous catalytic core and F(0) containing the membrane proton channel, linked together by a central stalk and a peripheral stalk. During catalysis, ATP synthesis in the catalytic domain of F(1) is coupled via a rotary mechanism of the central stalk subunits to proton translocation. Key component of the F(0) channel; it plays a direct role in translocation across the membrane. A homomeric c-ring of between 10-14 subunits forms the central stalk rotor element with the F(1) delta and epsilon subunits. The polypeptide is ATP synthase subunit c (Mycoplasma mobile (strain ATCC 43663 / 163K / NCTC 11711) (Mesomycoplasma mobile)).